A 238-amino-acid polypeptide reads, in one-letter code: Aspartate/glutamate leucyltransferase (238 aa).

The protein belongs to the R-transferase family. Bpt subfamily.

Its subcellular location is the cytoplasm. It carries out the reaction N-terminal L-glutamyl-[protein] + L-leucyl-tRNA(Leu) = N-terminal L-leucyl-L-glutamyl-[protein] + tRNA(Leu) + H(+). The catalysed reaction is N-terminal L-aspartyl-[protein] + L-leucyl-tRNA(Leu) = N-terminal L-leucyl-L-aspartyl-[protein] + tRNA(Leu) + H(+). Functionally, functions in the N-end rule pathway of protein degradation where it conjugates Leu from its aminoacyl-tRNA to the N-termini of proteins containing an N-terminal aspartate or glutamate. The chain is Aspartate/glutamate leucyltransferase from Aeromonas hydrophila subsp. hydrophila (strain ATCC 7966 / DSM 30187 / BCRC 13018 / CCUG 14551 / JCM 1027 / KCTC 2358 / NCIMB 9240 / NCTC 8049).